A 177-amino-acid polypeptide reads, in one-letter code: MKKPVGTTEVILAPGQVSFATRPTRLRTLLGSCVAITFWHPQRLIGGMCHFMLPGRLRKHQPLDGRYADEALELLLRHAQVNGTHARDYQVKLFGGGEMFPDLHRRLPTQDVASLNIRAALALAERYHLHLTAQDMGSTGYRTIMFDLWNGNVWVRHQPMGLLQEDAYQKNQCAGGR.

It belongs to the CheD family.

The catalysed reaction is L-glutaminyl-[protein] + H2O = L-glutamyl-[protein] + NH4(+). Its function is as follows. Probably deamidates glutamine residues to glutamate on methyl-accepting chemotaxis receptors (MCPs), playing an important role in chemotaxis. The chain is Probable chemoreceptor glutamine deamidase CheD from Pseudomonas fluorescens (strain SBW25).